The chain runs to 392 residues: Cell division protein FtsZ (392 aa).

Residues 24 to 28 (GGGCN), 111 to 113 (GTG), Glu142, Arg145, and Asp189 contribute to the GTP site.

The protein belongs to the FtsZ family. In terms of assembly, homodimer. Polymerizes to form a dynamic ring structure in a strictly GTP-dependent manner. Interacts directly with several other division proteins.

The protein localises to the cytoplasm. In terms of biological role, essential cell division protein that forms a contractile ring structure (Z ring) at the future cell division site. The regulation of the ring assembly controls the timing and the location of cell division. One of the functions of the FtsZ ring is to recruit other cell division proteins to the septum to produce a new cell wall between the dividing cells. Binds GTP and shows GTPase activity. The protein is Cell division protein FtsZ of Neisseria gonorrhoeae.